The primary structure comprises 697 residues: Elongation factor G 2 (697 aa).

A tr-type G domain is found at 5–280; the sequence is SKYRNIGIFA…AVVDYLPDPV (276 aa). Residues 14-21, 78-82, and 132-135 each bind GTP; these read AHVDAGKT, DTPGH, and NKLD.

It belongs to the TRAFAC class translation factor GTPase superfamily. Classic translation factor GTPase family. EF-G/EF-2 subfamily.

Its subcellular location is the cytoplasm. Functionally, catalyzes the GTP-dependent ribosomal translocation step during translation elongation. During this step, the ribosome changes from the pre-translocational (PRE) to the post-translocational (POST) state as the newly formed A-site-bound peptidyl-tRNA and P-site-bound deacylated tRNA move to the P and E sites, respectively. Catalyzes the coordinated movement of the two tRNA molecules, the mRNA and conformational changes in the ribosome. The chain is Elongation factor G 2 from Shewanella frigidimarina (strain NCIMB 400).